The primary structure comprises 213 residues: MDLTDTQQAILALIAERIDADGVPPSQTEIARAFGFKGVRAAQYHLEALEQAGAIRRVPGQARGIRLAGQGGQTRAAAVSEPVRDDVLRLPVLGRVAAGLPIGADIGSDDFVVLDRVFFSPSPDYLLKVQGDSMRDEGIFNGDLIGVHRTRDARSGQIVVARIDEEITVKLLKIGKDRIRLLPRNPDYAPIEVLPDQDFAIEGLYCGLLRPNR.

Positions 27-47 form a DNA-binding region, H-T-H motif; that stretch reads QTEIARAFGFKGVRAAQYHLE. Residues S133 and K170 each act as for autocatalytic cleavage activity in the active site.

This sequence belongs to the peptidase S24 family. As to quaternary structure, homodimer.

It catalyses the reaction Hydrolysis of Ala-|-Gly bond in repressor LexA.. In terms of biological role, represses a number of genes involved in the response to DNA damage (SOS response), including recA and lexA. In the presence of single-stranded DNA, RecA interacts with LexA causing an autocatalytic cleavage which disrupts the DNA-binding part of LexA, leading to derepression of the SOS regulon and eventually DNA repair. The chain is LexA repressor 2 from Xanthomonas oryzae pv. oryzae (strain KACC10331 / KXO85).